Reading from the N-terminus, the 290-residue chain is Nucleotide-binding protein Clos_0574 (290 aa).

ATP is bound at residue Gly-8–Ser-15. Asp-59–Gly-62 contacts GTP.

The protein belongs to the RapZ-like family.

Displays ATPase and GTPase activities. The protein is Nucleotide-binding protein Clos_0574 of Alkaliphilus oremlandii (strain OhILAs) (Clostridium oremlandii (strain OhILAs)).